The primary structure comprises 388 residues: Succinate--CoA ligase [ADP-forming] subunit beta (388 aa).

The ATP-grasp domain maps to 9 to 243 (KQLFHRYGIP…ESQLAPLEVR (235 aa)). ATP contacts are provided by residues K45, 52–54 (GRG), E98, V101, and E106. Mg(2+) contacts are provided by N198 and D212. Substrate-binding positions include N263 and 320 to 322 (GIM).

This sequence belongs to the succinate/malate CoA ligase beta subunit family. Heterotetramer of two alpha and two beta subunits. The cofactor is Mg(2+).

It catalyses the reaction succinate + ATP + CoA = succinyl-CoA + ADP + phosphate. The enzyme catalyses GTP + succinate + CoA = succinyl-CoA + GDP + phosphate. Its pathway is carbohydrate metabolism; tricarboxylic acid cycle; succinate from succinyl-CoA (ligase route): step 1/1. Functionally, succinyl-CoA synthetase functions in the citric acid cycle (TCA), coupling the hydrolysis of succinyl-CoA to the synthesis of either ATP or GTP and thus represents the only step of substrate-level phosphorylation in the TCA. The beta subunit provides nucleotide specificity of the enzyme and binds the substrate succinate, while the binding sites for coenzyme A and phosphate are found in the alpha subunit. This is Succinate--CoA ligase [ADP-forming] subunit beta from Syntrophotalea carbinolica (strain DSM 2380 / NBRC 103641 / GraBd1) (Pelobacter carbinolicus).